We begin with the raw amino-acid sequence, 163 residues long: 2,3-dimethylmalate dehydratase small subunit (163 aa).

The protein belongs to the LeuD family. LeuD type 2 subfamily. Heterodimer of a large and a small subunit.

It catalyses the reaction (2R,3S)-2,3-dimethylmalate = dimethylmaleate + H2O. Its pathway is cofactor degradation; nicotinate degradation; propanoate and pyruvate from 6-hydroxynicotinate: step 7/8. The sequence is that of 2,3-dimethylmalate dehydratase small subunit from Eubacterium barkeri (Clostridium barkeri).